Here is a 237-residue protein sequence, read N- to C-terminus: V-type proton ATPase subunit E3 (237 aa).

Met1 carries the post-translational modification N-acetylmethionine. The stretch at 9 to 67 forms a coiled coil; that stretch reads QIQQMVRFIRQEAEEKANEISISSEEEFNIEKLQLVEAEKKKIRQEYEKKEKQVDVRKK.

Belongs to the V-ATPase E subunit family. In terms of assembly, V-ATPase is a heteromultimeric enzyme composed of a peripheral catalytic V1 complex (components A to H) attached to an integral membrane V0 proton pore complex (components: a, c, c'', d and e).

Its subcellular location is the vacuole membrane. In terms of biological role, subunit of the peripheral V1 complex of vacuolar ATPase essential for assembly or catalytic function. V-ATPase is responsible for acidifying a variety of intracellular compartments in eukaryotic cells. The polypeptide is V-type proton ATPase subunit E3 (VHA-E3) (Arabidopsis thaliana (Mouse-ear cress)).